A 206-amino-acid chain; its full sequence is Na(+)-translocating NADH-quinone reductase subunit E (206 aa).

Transmembrane regions (helical) follow at residues 12–32 (AVFV…FIAI), 36–56 (IQTA…TVPV), 85–105 (FLGL…LEMT), 118–138 (GIFL…LFMV), 148–168 (VVYG…LAGI), and 184–204 (LGIT…FSGV).

Belongs to the NqrDE/RnfAE family. Composed of six subunits; NqrA, NqrB, NqrC, NqrD, NqrE and NqrF.

The protein resides in the cell inner membrane. The enzyme catalyses a ubiquinone + n Na(+)(in) + NADH + H(+) = a ubiquinol + n Na(+)(out) + NAD(+). NQR complex catalyzes the reduction of ubiquinone-1 to ubiquinol by two successive reactions, coupled with the transport of Na(+) ions from the cytoplasm to the periplasm. NqrA to NqrE are probably involved in the second step, the conversion of ubisemiquinone to ubiquinol. The chain is Na(+)-translocating NADH-quinone reductase subunit E from Alcanivorax borkumensis (strain ATCC 700651 / DSM 11573 / NCIMB 13689 / SK2).